The following is a 1070-amino-acid chain: Granule associated Rac and RHOG effector protein 1 (1070 aa).

3 disordered regions span residues 681-771 (EQKA…VGAG), 855-992 (SQAM…STLP), and 1032-1070 (SYVQTPPQPPPPPAHKAAPKGFKAFPGKGERRPAYLPQY). A compositionally biased stretch (pro residues) spans 692-702 (PSLPVPPPPRA). Composition is skewed to low complexity over residues 719–742 (PQQQSPKQQQPQVQYYQHLLQPIG), 906–924 (AQGDSASSSDETSSANGDS), and 951–962 (TSTLPSPPLLTT). Phosphoserine is present on S723. The span at 977–992 (PKAPWQHPSPLPSTLP) shows a compositional bias: pro residues. Low complexity predominate over residues 1046–1058 (HKAAPKGFKAFPG).

As to quaternary structure, interacts with AGO2 and TNRC6A.

Its subcellular location is the cytoplasm. It localises to the P-body. Acts as an effector of RAC1. Associates with CCR4-NOT complex which is one of the major cellular mRNA deadenylases and is linked to various cellular processes including bulk mRNA degradation, miRNA-mediated repression, translational repression during translational initiation and general transcription regulation. May also play a role in miRNA silencing machinery. This chain is Granule associated Rac and RHOG effector protein 1, found in Homo sapiens (Human).